Consider the following 183-residue polypeptide: Segregation and condensation protein B (183 aa).

Belongs to the ScpB family. Homodimer. Homodimerization may be required to stabilize the binding of ScpA to the Smc head domains. Component of a cohesin-like complex composed of ScpA, ScpB and the Smc homodimer, in which ScpA and ScpB bind to the head domain of Smc. The presence of the three proteins is required for the association of the complex with DNA.

The protein localises to the cytoplasm. Participates in chromosomal partition during cell division. May act via the formation of a condensin-like complex containing Smc and ScpA that pull DNA away from mid-cell into both cell halves. The sequence is that of Segregation and condensation protein B from Streptococcus pyogenes serotype M12 (strain MGAS2096).